A 186-amino-acid chain; its full sequence is Casparian strip membrane protein 1 (186 aa).

At 1 to 26 the chain is on the cytoplasmic side; it reads MKSSPAELISEAKSSTQNSKMKRAVS. Residues 27–47 form a helical membrane-spanning segment; that stretch reads VLDFILRLIAVVATLASAIAM. Over 48–74 the chain is Extracellular; the sequence is GTTDESLPFFTQFIRFRAEYDDLPTLR. The chain crosses the membrane as a helical span at residues 75–95; sequence LFVVASAFASGYLILSLPLSI. Topologically, residues 96–107 are cytoplasmic; that stretch reads LHITRSSARRTR. A helical transmembrane segment spans residues 108–128; sequence VILIILDMVMLTSLTAASSAA. Residues 129–161 lie on the Extracellular side of the membrane; it reads AAIVYLAHKGNAKANWFAFCQQYDSFCERISGS. A helical membrane pass occupies residues 162–182; sequence LIGSFIAIPLFIMLILFSALV. The Cytoplasmic portion of the chain corresponds to 183-186; sequence LSKR.

It belongs to the Casparian strip membrane proteins (CASP) family. Homodimer and heterodimers.

The protein resides in the cell membrane. In terms of biological role, regulates membrane-cell wall junctions and localized cell wall deposition. Required for establishment of the Casparian strip membrane domain (CSD) and the subsequent formation of Casparian strips, a cell wall modification of the root endodermis that determines an apoplastic barrier between the intraorganismal apoplasm and the extraorganismal apoplasm and prevents lateral diffusion. The protein is Casparian strip membrane protein 1 of Lotus japonicus (Lotus corniculatus var. japonicus).